Reading from the N-terminus, the 559-residue chain is MTAQNSKFRSVGIRAPRGTQLTAKSWLTEAPLRMLMNNLDPEVAENSYELVVYGGIGRAARNWECYDKIIETLKELEDDETLLIQSGKPVGVFKTHSNAPRVLIANSNLVPHWATWEHFNELDAKGLAMYGQMTAGSWIYIGSQGIVQGTYETFVEAGRQHYNGNLQGRWVLTAGLGGMGGAQPLAATLAGACSLNIECQQSRIDFRLRTGYVDEQAKDLDDALTRIEKYTQEGKAISIALCGNAAEILPELVRRGVRPDLVTDQTSAHDPLNGYLPKNWSWEEYRQRAISAPEEVIKAAKSSMVEHVKAMLIFQQQGIPVFDYGNNIRQMAYEVGVENAFDFPGFVPTYIRPLFCRGIGPFRWVALSGDPQDIYKTDAKVKELLPDDQHLHHWLDMARERISFQGLPARICWVGLGQRAKLGLAFNEMVRSGELSAPIVIGRDHLDSGSVASPNRETESMCDGSDAVSDWPLLNALLNTASGATWVSLHHGGGVGMGFSQHAGMVIVCDGTDEAAERIARVLHNDPATGVMRHADAGYEIAIHCAKEQGLDLPMLNTK.

NAD(+) is bound by residues 54 to 55 (GG), glutamine 132, 178 to 180 (GMG), glutamate 198, arginine 203, 244 to 245 (NA), 265 to 269 (QTSAH), 275 to 276 (YL), and tyrosine 324. Residue cysteine 412 is part of the active site. Glycine 494 provides a ligand contact to NAD(+).

It belongs to the urocanase family. NAD(+) serves as cofactor.

It localises to the cytoplasm. It catalyses the reaction 4-imidazolone-5-propanoate = trans-urocanate + H2O. Its pathway is amino-acid degradation; L-histidine degradation into L-glutamate; N-formimidoyl-L-glutamate from L-histidine: step 2/3. In terms of biological role, catalyzes the conversion of urocanate to 4-imidazolone-5-propionate. This is Urocanate hydratase from Photorhabdus laumondii subsp. laumondii (strain DSM 15139 / CIP 105565 / TT01) (Photorhabdus luminescens subsp. laumondii).